Consider the following 521-residue polypeptide: Cytochrome P450 1A1 (521 aa).

Residue phenylalanine 229 participates in substrate binding. A heme-binding site is contributed by cysteine 463.

It belongs to the cytochrome P450 family. The cofactor is heme.

It is found in the endoplasmic reticulum membrane. The protein localises to the microsome membrane. The catalysed reaction is an organic molecule + reduced [NADPH--hemoprotein reductase] + O2 = an alcohol + oxidized [NADPH--hemoprotein reductase] + H2O + H(+). Its function is as follows. Cytochromes P450 are a group of heme-thiolate monooxygenases. They oxidize a variety of structurally unrelated compounds, including steroids, fatty acids, and xenobiotics. The sequence is that of Cytochrome P450 1A1 (cyp1a1) from Chaetodon capistratus (Four-eye butterflyfish).